The chain runs to 345 residues: Biotin synthase (345 aa).

A Radical SAM core domain is found at 38–256 (RQVQVSTLLS…IAVARIMMPS (219 aa)). The [4Fe-4S] cluster site is built by Cys53, Cys57, and Cys60. Residues Cys97, Cys128, Cys188, and Arg260 each coordinate [2Fe-2S] cluster.

This sequence belongs to the radical SAM superfamily. Biotin synthase family. As to quaternary structure, homodimer. It depends on [4Fe-4S] cluster as a cofactor. Requires [2Fe-2S] cluster as cofactor.

It catalyses the reaction (4R,5S)-dethiobiotin + (sulfur carrier)-SH + 2 reduced [2Fe-2S]-[ferredoxin] + 2 S-adenosyl-L-methionine = (sulfur carrier)-H + biotin + 2 5'-deoxyadenosine + 2 L-methionine + 2 oxidized [2Fe-2S]-[ferredoxin]. Its pathway is cofactor biosynthesis; biotin biosynthesis; biotin from 7,8-diaminononanoate: step 2/2. Its function is as follows. Catalyzes the conversion of dethiobiotin (DTB) to biotin by the insertion of a sulfur atom into dethiobiotin via a radical-based mechanism. This is Biotin synthase from Yersinia pseudotuberculosis serotype O:1b (strain IP 31758).